We begin with the raw amino-acid sequence, 283 residues long: Large ribosomal subunit protein uL2 (283 aa).

Residues Arg215–Asn283 form a disordered region. Basic residues predominate over residues Ile274–Asn283.

This sequence belongs to the universal ribosomal protein uL2 family. Part of the 50S ribosomal subunit. Forms a bridge to the 30S subunit in the 70S ribosome.

Its function is as follows. One of the primary rRNA binding proteins. Required for association of the 30S and 50S subunits to form the 70S ribosome, for tRNA binding and peptide bond formation. It has been suggested to have peptidyltransferase activity; this is somewhat controversial. Makes several contacts with the 16S rRNA in the 70S ribosome. The polypeptide is Large ribosomal subunit protein uL2 (Mycoplasma mobile (strain ATCC 43663 / 163K / NCTC 11711) (Mesomycoplasma mobile)).